The chain runs to 250 residues: NAD-dependent protein deacylase 1 (250 aa).

Residues 1–250 (MRAVVELLAG…PELLRRAFPG (250 aa)) enclose the Deacetylase sirtuin-type domain. 19–39 (GAGVSAESGIPTFRDALGGLW) contributes to the NAD(+) binding site. Residues Tyr-64 and Arg-67 each coordinate substrate. 98–101 (QNVD) lines the NAD(+) pocket. Catalysis depends on His-116, which acts as the Proton acceptor. Residues Cys-124, Cys-127, Cys-152, and Cys-155 each contribute to the Zn(2+) site. NAD(+) contacts are provided by residues 192–194 (GTS), 218–220 (NPQ), and Ala-236.

It belongs to the sirtuin family. Class III subfamily. The cofactor is Zn(2+).

It localises to the cytoplasm. The enzyme catalyses N(6)-acetyl-L-lysyl-[protein] + NAD(+) + H2O = 2''-O-acetyl-ADP-D-ribose + nicotinamide + L-lysyl-[protein]. The catalysed reaction is N(6)-succinyl-L-lysyl-[protein] + NAD(+) + H2O = 2''-O-succinyl-ADP-D-ribose + nicotinamide + L-lysyl-[protein]. NAD-dependent lysine deacetylase and desuccinylase that specifically removes acetyl and succinyl groups on target proteins. Modulates the activities of several proteins which are inactive in their acylated form. This is NAD-dependent protein deacylase 1 from Pseudomonas aeruginosa (strain ATCC 15692 / DSM 22644 / CIP 104116 / JCM 14847 / LMG 12228 / 1C / PRS 101 / PAO1).